A 253-amino-acid chain; its full sequence is MLLDDQLKYWVLLPISIVMVLTGVLKQYIMTLITGSSANEAQPRVKLTEWQYLQWAQLLIGNGGNLSSDAFAAKKEFLVKDLTEERHLAKAKQQGGSQAGEVPNPFNDPNMSNAMMNMAKGNMASFIPQTIIMWWVNHFFAGFILMQLPFPLTAKFKEMLQTGIICQDLDVRWVSSISWYFISVLGLNPVYNLIGLNDQDMGIQAGIGGPQGPQGPPQSQVDKAMHAMANDLTIIQHETCLDNVEQRVLKQYM.

Helical transmembrane passes span tryptophan 10–methionine 30, phenylalanine 126–methionine 146, and serine 176–leucine 196.

This sequence belongs to the EMC3 family. Component of the ER membrane protein complex (EMC), which is composed of EMC1, EMC2, EMC3, EMC4, EMC5 and EMC6.

The protein resides in the endoplasmic reticulum membrane. Functionally, the EMC seems to be required for efficient folding of proteins in the endoplasmic reticulum (ER). The polypeptide is ER membrane protein complex subunit 3 (AIM27) (Saccharomyces cerevisiae (strain RM11-1a) (Baker's yeast)).